The primary structure comprises 158 residues: Large ribosomal subunit protein mL50 (158 aa).

It belongs to the mitochondrion-specific ribosomal protein mL50 family. As to quaternary structure, component of the mitochondrial large ribosomal subunit (mt-LSU). Mature mammalian 55S mitochondrial ribosomes consist of a small (28S) and a large (39S) subunit. The 28S small subunit contains a 12S ribosomal RNA (12S mt-rRNA) and 30 different proteins. The 39S large subunit contains a 16S rRNA (16S mt-rRNA), a copy of mitochondrial valine transfer RNA (mt-tRNA(Val)), which plays an integral structural role, and 52 different proteins.

The protein resides in the mitochondrion. The polypeptide is Large ribosomal subunit protein mL50 (MRPL50) (Homo sapiens (Human)).